Consider the following 863-residue polypeptide: Ubiquitin carboxyl-terminal hydrolase 13 (863 aa).

Residue S114 is modified to Phosphoserine. T122 bears the Phosphothreonine mark. Residues 187 to 295 (PVSKYANNLT…KHLAHFGIDM (109 aa)) form a UBP-type; degenerate zinc finger. The Zn(2+) site is built by C211, C214, C231, and H244. K311 participates in a covalent cross-link: Glycyl lysine isopeptide (Lys-Gly) (interchain with G-Cter in SUMO2). Residues 336-861 (TGLKNLGNSC…LGYMYFYRRI (526 aa)) form the USP domain. The active-site Nucleophile is the C345. K405 is covalently cross-linked (Glycyl lysine isopeptide (Lys-Gly) (interchain with G-Cter in SUMO2)). UBA domains are found at residues 652-693 (DIDE…IVVH) and 727-767 (QPPE…IFSH). H823 (proton acceptor) is an active-site residue.

The protein belongs to the peptidase C19 family. As to quaternary structure, interacts with UFD1. Interacts (via UBA domains) with SIAH2 (when ubiquitinated). Interacts with BAG6; the interaction is direct and may mediate UBL4A deubiquitination. Interacts (via UBA 2 domain) with AMFR; the interaction is direct. Interacts with UBL4A; may be indirect via BAG6. Interacts with NEDD4.

The protein localises to the cytoplasm. It carries out the reaction Thiol-dependent hydrolysis of ester, thioester, amide, peptide and isopeptide bonds formed by the C-terminal Gly of ubiquitin (a 76-residue protein attached to proteins as an intracellular targeting signal).. Specifically inhibited by spautin-1 (specific and potent autophagy inhibitor-1), a derivative of MBCQ that binds to USP13 and inhibits deubiquitinase activity. Regulated by PIK3C3/VPS34-containing complexes. The weak deubiquitinase activity in vitro suggests the existence of some mechanism that activates the enzyme. In terms of biological role, deubiquitinase that mediates deubiquitination of target proteins such as BECN1, MITF, SKP2 and USP10 and is involved in various processes such as autophagy, endoplasmic reticulum-associated degradation (ERAD), cell cycle progression or DNA damage response. Component of a regulatory loop that controls autophagy and p53/TP53 levels: mediates deubiquitination of BECN1, a key regulator of autophagy, leading to stabilize the PIK3C3/VPS34-containing complexes. Alternatively, forms with NEDD4 a deubiquitination complex, which subsequently stabilizes VPS34 to promote autophagy. Also deubiquitinates USP10, an essential regulator of p53/TP53 stability. In turn, PIK3C3/VPS34-containing complexes regulate USP13 stability, suggesting the existence of a regulatory system by which PIK3C3/VPS34-containing complexes regulate p53/TP53 protein levels via USP10 and USP13. Recruited by nuclear UFD1 and mediates deubiquitination of SKP2, thereby regulating endoplasmic reticulum-associated degradation (ERAD). Also regulates ERAD through the deubiquitination of UBL4A a component of the BAG6/BAT3 complex. Mediates stabilization of SIAH2 independently of deubiquitinase activity: binds ubiquitinated SIAH2 and acts by impairing SIAH2 autoubiquitination. Regulates the cell cycle progression by stabilizing cell cycle proteins such as SKP2 and AURKB. In addition, plays an important role in maintaining genomic stability and in DNA replication checkpoint activation via regulation of RAP80 and TOPBP1. Deubiquitinates the multifunctional protein HMGB1 and subsequently drives its nucleocytoplasmic localization and its secretion. Positively regulates type I and type II interferon signalings by deubiquitinating STAT1 but negatively regulates antiviral response by deubiquitinating STING1. The protein is Ubiquitin carboxyl-terminal hydrolase 13 (USP13) of Bos taurus (Bovine).